A 177-amino-acid polypeptide reads, in one-letter code: Cytochrome c-type biogenesis protein CcmE (177 aa).

At 1–7 (MTRKSRR) the chain is on the cytoplasmic side. A helical; Signal-anchor for type II membrane protein membrane pass occupies residues 8-28 (LILIAACGAVLALALGLILSA). At 29 to 177 (MSGSIVFFRS…DATLGQRSER (149 aa)) the chain is on the periplasmic side. Positions 122 and 126 each coordinate heme. The disordered stretch occupies residues 133–177 (DALKAQGRWQEGGSKEAPKDASKAAPKDAAKPETADATLGQRSER). Residues 145-166 (GSKEAPKDASKAAPKDAAKPET) are compositionally biased toward basic and acidic residues.

Belongs to the CcmE/CycJ family.

The protein localises to the cell inner membrane. Functionally, heme chaperone required for the biogenesis of c-type cytochromes. Transiently binds heme delivered by CcmC and transfers the heme to apo-cytochromes in a process facilitated by CcmF and CcmH. In Methylorubrum extorquens (strain PA1) (Methylobacterium extorquens), this protein is Cytochrome c-type biogenesis protein CcmE.